Reading from the N-terminus, the 856-residue chain is Valine--tRNA ligase (856 aa).

The 'HIGH' region motif lies at P47–H57. The short motif at K578–S582 is the 'KMSKS' region element. K581 contacts ATP.

It belongs to the class-I aminoacyl-tRNA synthetase family. ValS type 2 subfamily. In terms of assembly, monomer.

It localises to the cytoplasm. It catalyses the reaction tRNA(Val) + L-valine + ATP = L-valyl-tRNA(Val) + AMP + diphosphate. Its function is as follows. Catalyzes the attachment of valine to tRNA(Val). As ValRS can inadvertently accommodate and process structurally similar amino acids such as threonine, to avoid such errors, it has a 'posttransfer' editing activity that hydrolyzes mischarged Thr-tRNA(Val) in a tRNA-dependent manner. The sequence is that of Valine--tRNA ligase from Tropheryma whipplei (strain TW08/27) (Whipple's bacillus).